The following is a 772-amino-acid chain: NAD(P)H-quinone oxidoreductase subunit 5, chloroplastic (772 aa).

The next 16 helical transmembrane spans lie at 9–29 (WIIP…LLLF), 40–60 (WSFP…YLSI), 89–109 (IDPL…LVLF), 125–145 (FAYL…SNLI), 147–167 (IYIF…FWFT), 185–205 (GDFG…SFEF), 220–240 (NQVH…GAVA), 259–279 (TPIS…FLVA), 290–312 (YIMN…LALA), 328–348 (LGYM…FHLI), 355–375 (ALLF…VGYS), 397–417 (TAFL…CFWS), 426–446 (WLYS…TAFY), 550–570 (LFSL…GIPF), 604–624 (FVTN…IATF), and 731–751 (IFIF…FFVL).

It belongs to the complex I subunit 5 family. In terms of assembly, NDH is composed of at least 16 different subunits, 5 of which are encoded in the nucleus.

It is found in the plastid. Its subcellular location is the chloroplast thylakoid membrane. The catalysed reaction is a plastoquinone + NADH + (n+1) H(+)(in) = a plastoquinol + NAD(+) + n H(+)(out). The enzyme catalyses a plastoquinone + NADPH + (n+1) H(+)(in) = a plastoquinol + NADP(+) + n H(+)(out). Functionally, NDH shuttles electrons from NAD(P)H:plastoquinone, via FMN and iron-sulfur (Fe-S) centers, to quinones in the photosynthetic chain and possibly in a chloroplast respiratory chain. The immediate electron acceptor for the enzyme in this species is believed to be plastoquinone. Couples the redox reaction to proton translocation, and thus conserves the redox energy in a proton gradient. The protein is NAD(P)H-quinone oxidoreductase subunit 5, chloroplastic (ndhF) of Oenothera argillicola (Appalachian evening primrose).